The following is a 694-amino-acid chain: ATP-binding cassette sub-family G member 8 (694 aa).

Topologically, residues 1–437 are cytoplasmic; that stretch reads MAEKTKEETQ…ISNDFRDLPT (437 aa). One can recognise an ABC transporter domain in the interval 91–335; that stretch reads AQFKLPWRSR…FTSIGYPCPR (245 aa). The region spanning 436 to 684 is the ABC transmembrane type-2 domain; the sequence is PTLFIHGAEA…FLSLYYLSLK (249 aa). The chain crosses the membrane as a helical span at residues 438–458; the sequence is LFIHGAEACLMSLIIGFLYYG. Over 459–468 the chain is Extracellular; sequence HADKPLSFMD. The helical transmembrane segment at 469–489 threads the bilayer; it reads MAALLFMIGALIPFNVILDVV. Topologically, residues 490 to 518 are cytoplasmic; the sequence is SKCHSERSLLYYELEDGLYTAGPYFFAKV. The helical transmembrane segment at 519 to 539 threads the bilayer; the sequence is LGELPEHCAYVIIYGMPIYWL. The Extracellular portion of the chain corresponds to 540–548; that stretch reads TNLRPGPEL. Residues 549–569 traverse the membrane as a helical segment; that stretch reads FLLHFMLLWLVVFCCRTMALA. Residues 570–576 lie on the Cytoplasmic side of the membrane; the sequence is ASAMLPT. A helical membrane pass occupies residues 577–597; the sequence is FHMSSFCCNALYNSFYLTAGF. Residues 598-660 are Extracellular-facing; it reads MINLNNLWIV…VTAMDLNSHP (63 aa). N-linked (GlcNAc...) asparagine glycosylation occurs at asparagine 640. Residues 661–681 traverse the membrane as a helical segment; that stretch reads LYAIYLIVIGISCGFLSLYYL. Topologically, residues 682 to 694 are cytoplasmic; it reads SLKFIKQKSIQDW.

It belongs to the ABC transporter superfamily. ABCG family. Eye pigment precursor importer (TC 3.A.1.204) subfamily. Heterodimer with ABCG8. Requires Mg(2+) as cofactor. Post-translationally, N-glycosylated. N-glycosylation is important for efficient export out of the endoplasmic reticulum. As to expression, highest expression in liver, with lower levels in small intestine and colon.

The protein resides in the cell membrane. It is found in the apical cell membrane. The enzyme catalyses cholesterol(in) + ATP + H2O = cholesterol(out) + ADP + phosphate + H(+). It carries out the reaction sitosterol(in) + ATP + H2O = sitosterol(out) + ADP + phosphate + H(+). Functionally, ABCG5 and ABCG8 form an obligate heterodimer that mediates Mg(2+)- and ATP-dependent sterol transport across the cell membrane. Plays an essential role in the selective transport of the dietary cholesterol in and out of the enterocytes and in the selective sterol excretion by the liver into bile. Required for normal sterol homeostasis. The heterodimer with ABCG5 has ATPase activity. This chain is ATP-binding cassette sub-family G member 8, found in Rattus norvegicus (Rat).